We begin with the raw amino-acid sequence, 206 residues long: Uridine kinase (206 aa).

Residue 11–18 coordinates ATP; that stretch reads GGTGSGKS.

Belongs to the uridine kinase family.

The protein resides in the cytoplasm. The enzyme catalyses uridine + ATP = UMP + ADP + H(+). The catalysed reaction is cytidine + ATP = CMP + ADP + H(+). It functions in the pathway pyrimidine metabolism; CTP biosynthesis via salvage pathway; CTP from cytidine: step 1/3. It participates in pyrimidine metabolism; UMP biosynthesis via salvage pathway; UMP from uridine: step 1/1. The protein is Uridine kinase of Clostridium botulinum (strain Okra / Type B1).